The sequence spans 102 residues: NADH-quinone oxidoreductase subunit K 2 (102 aa).

Helical transmembrane passes span 6-26 (LEAF…GIIA), 30-50 (LVTV…ALVG), and 66-86 (FIIA…IAIF).

This sequence belongs to the complex I subunit 4L family. NDH-1 is composed of 14 different subunits. Subunits NuoA, H, J, K, L, M, N constitute the membrane sector of the complex.

The protein localises to the cell inner membrane. It catalyses the reaction a quinone + NADH + 5 H(+)(in) = a quinol + NAD(+) + 4 H(+)(out). In terms of biological role, NDH-1 shuttles electrons from NADH, via FMN and iron-sulfur (Fe-S) centers, to quinones in the respiratory chain. The immediate electron acceptor for the enzyme in this species is believed to be ubiquinone. Couples the redox reaction to proton translocation (for every two electrons transferred, four hydrogen ions are translocated across the cytoplasmic membrane), and thus conserves the redox energy in a proton gradient. This is NADH-quinone oxidoreductase subunit K 2 from Aquifex aeolicus (strain VF5).